We begin with the raw amino-acid sequence, 497 residues long: Cysteine--tRNA ligase (497 aa).

Cys-46 is a Zn(2+) binding site. The short motif at 48 to 58 (PTVYSDAHLGH) is the 'HIGH' region element. 3 residues coordinate Zn(2+): Cys-237, His-262, and Glu-266. Residues 293–297 (KMSKS) carry the 'KMSKS' region motif. Lys-296 contacts ATP.

The protein belongs to the class-I aminoacyl-tRNA synthetase family. As to quaternary structure, monomer. Zn(2+) serves as cofactor.

It localises to the cytoplasm. It catalyses the reaction tRNA(Cys) + L-cysteine + ATP = L-cysteinyl-tRNA(Cys) + AMP + diphosphate. In Deinococcus geothermalis (strain DSM 11300 / CIP 105573 / AG-3a), this protein is Cysteine--tRNA ligase.